Consider the following 401-residue polypeptide: Argininosuccinate synthase (401 aa).

8–16 (AYSGGLDTS) contributes to the ATP binding site. Tyrosine 85 provides a ligand contact to L-citrulline. Glycine 115 lines the ATP pocket. Threonine 117, asparagine 121, and aspartate 122 together coordinate L-aspartate. Asparagine 121 lines the L-citrulline pocket. L-citrulline is bound by residues arginine 125, serine 173, glutamate 258, and tyrosine 270.

This sequence belongs to the argininosuccinate synthase family. Type 1 subfamily. As to quaternary structure, homotetramer.

Its subcellular location is the cytoplasm. It catalyses the reaction L-citrulline + L-aspartate + ATP = 2-(N(omega)-L-arginino)succinate + AMP + diphosphate + H(+). It functions in the pathway amino-acid biosynthesis; L-arginine biosynthesis; L-arginine from L-ornithine and carbamoyl phosphate: step 2/3. In Staphylococcus aureus (strain MRSA252), this protein is Argininosuccinate synthase.